A 265-amino-acid chain; its full sequence is Putative 2-aminoethylphosphonate transport system permease protein PhnV (265 aa).

Helical transmembrane passes span 13–33 (GVVA…VILM), 69–89 (LTIG…AALA), 104–124 (VFYL…LVAF), 131–151 (MNGT…AFTF), 185–205 (LPLL…LSMG), and 233–253 (NIAD…LLMM). Residues 65 to 253 (LLASLTIGFC…LVAITLLLMM (189 aa)) form the ABC transmembrane type-1 domain.

The protein belongs to the binding-protein-dependent transport system permease family.

It is found in the cell inner membrane. Probably part of the PhnSTUV complex (TC 3.A.1.11.5) involved in 2-aminoethylphosphonate import. Probably responsible for the translocation of the substrate across the membrane. In Salmonella paratyphi A (strain ATCC 9150 / SARB42), this protein is Putative 2-aminoethylphosphonate transport system permease protein PhnV (phnV).